Here is a 645-residue protein sequence, read N- to C-terminus: Envelope glycoprotein (645 aa).

The first 33 residues, 1 to 33, serve as a signal peptide directing secretion; the sequence is MESPAFSKPLKDKINPWGPLIIMGILVRAGASV. The interval 32–237 is receptor-binding domain (RBD); it reads SVQRDSPHQV…QVLNVGPRVP (206 aa). At 34–585 the chain is on the extracellular side; it reads QRDSPHQVFN…FNRSPWFTTL (552 aa). 2 N-linked (GlcNAc...) asparagine; by host glycosylation sites follow: N43 and N58. Intrachain disulfides connect C113–C130 and C122–C135. A disordered region spans residues 259 to 286; that stretch reads PRPPRPPPSGAASMVPGAPPPSQQPGTG. N-linked (GlcNAc...) asparagine; by host glycosylation occurs at N301. 6 cysteine pairs are disulfide-bonded: C311–C314, C311–C538, C341–C395, C360–C372, C402–C415, and C530–C537. The CXXC signature appears at 311-314; it reads CWLC. N333 and N340 each carry an N-linked (GlcNAc...) asparagine; by host glycan. N373 and N409 each carry an N-linked (GlcNAc...) asparagine; by host glycan. The tract at residues 447–467 is fusion peptide; the sequence is VSLTLALLLGGLTMGGIAAGV. A coiled-coil region spans residues 490 to 510; it reads DLGALEKSVSALEKSLTSLSE. Residues 513 to 529 are immunosuppression; the sequence is LQNRRGLDLLFLKEGGL. The CX6CC motif lies at 530–538; sequence CAALKKECC. The chain crosses the membrane as a helical span at residues 586–606; that stretch reads ISTIMGPLIVLLLILLFGPCI. C605 is lipidated: S-palmitoyl cysteine; by host. Over 607 to 640 the chain is Cytoplasmic; that stretch reads LNRLVQFVKDRISVVQALVLTQQYHQLKSIDPEE. A YXXL motif; contains endocytosis signal motif is present at residues 630 to 633; the sequence is YHQL.

In terms of assembly, the mature envelope protein (Env) consists of a trimer of SU-TM heterodimers attached by a labile interchain disulfide bond. The activated Env consists of SU monomers and TM trimers. Post-translationally, specific enzymatic cleavages in vivo yield mature proteins. Envelope glycoproteins are synthesized as an inactive precursor that is N-glycosylated and processed likely by host cell furin or by a furin-like protease in the Golgi to yield the mature SU and TM proteins. The cleavage site between SU and TM requires the minimal sequence [KR]-X-[KR]-R. The R-peptide is released from the C-terminus of the cytoplasmic tail of the TM protein upon particle formation as a result of proteolytic cleavage by the viral protease. Cleavage of this peptide is required for TM to become fusogenic. The CXXC motif is highly conserved across a broad range of retroviral envelope proteins. It is thought to participate in the formation of a labile disulfide bond possibly with the CX6CC motif present in the transmembrane protein. Isomerization of the intersubunit disulfide bond to an SU intrachain disulfide bond is thought to occur upon receptor recognition in order to allow membrane fusion. In terms of processing, the transmembrane protein is palmitoylated. Post-translationally, the R-peptide is palmitoylated.

It localises to the virion membrane. It is found in the host cell membrane. The surface protein (SU) attaches the virus to the host cell by binding to its receptor. This interaction activates a thiol in a CXXC motif of the C-terminal domain, where the other Cys residue participates in the formation of the intersubunit disulfide. The activated thiol will attack the disulfide and cause its isomerization into a disulfide isomer within the motif. This leads to SU displacement and TM refolding, and is thought to activate its fusogenic potential by unmasking its fusion peptide. Fusion occurs at the host cell plasma membrane. Functionally, the transmembrane protein (TM) acts as a class I viral fusion protein. Under the current model, the protein has at least 3 conformational states: pre-fusion native state, pre-hairpin intermediate state, and post-fusion hairpin state. During viral and target cell membrane fusion, the coiled coil regions (heptad repeats) assume a trimer-of-hairpins structure, positioning the fusion peptide in close proximity to the C-terminal region of the ectodomain. The formation of this structure appears to drive apposition and subsequent fusion of viral and target cell membranes. Membranes fusion leads to delivery of the nucleocapsid into the cytoplasm. In Xenotropic MuLV-related virus (isolate VP35) (XMRV), this protein is Envelope glycoprotein (env).